The sequence spans 335 residues: Beta-hexosaminidase (335 aa).

Substrate-binding positions include aspartate 60, arginine 68, arginine 133, and 163–164 (KH). Histidine 176 functions as the Proton donor/acceptor in the catalytic mechanism. Aspartate 247 acts as the Nucleophile in catalysis.

It belongs to the glycosyl hydrolase 3 family. NagZ subfamily.

Its subcellular location is the cytoplasm. The catalysed reaction is Hydrolysis of terminal non-reducing N-acetyl-D-hexosamine residues in N-acetyl-beta-D-hexosaminides.. It participates in cell wall biogenesis; peptidoglycan recycling. Its function is as follows. Plays a role in peptidoglycan recycling by cleaving the terminal beta-1,4-linked N-acetylglucosamine (GlcNAc) from peptide-linked peptidoglycan fragments, giving rise to free GlcNAc, anhydro-N-acetylmuramic acid and anhydro-N-acetylmuramic acid-linked peptides. This chain is Beta-hexosaminidase, found in Stenotrophomonas maltophilia (strain K279a).